Consider the following 211-residue polypeptide: Uracil phosphoribosyltransferase (211 aa).

Residues Arg-77, Arg-102, and 129-137 (DPMLATGGS) each bind 5-phospho-alpha-D-ribose 1-diphosphate. Residues Ile-192 and 197–199 (GDA) contribute to the uracil site. Asp-198 is a binding site for 5-phospho-alpha-D-ribose 1-diphosphate.

The protein belongs to the UPRTase family. Requires Mg(2+) as cofactor.

The catalysed reaction is UMP + diphosphate = 5-phospho-alpha-D-ribose 1-diphosphate + uracil. It functions in the pathway pyrimidine metabolism; UMP biosynthesis via salvage pathway; UMP from uracil: step 1/1. Allosterically activated by GTP. Functionally, catalyzes the conversion of uracil and 5-phospho-alpha-D-ribose 1-diphosphate (PRPP) to UMP and diphosphate. The sequence is that of Uracil phosphoribosyltransferase from Corynebacterium glutamicum (strain R).